Here is a 482-residue protein sequence, read N- to C-terminus: Cysteine--tRNA ligase (482 aa).

Cysteine 28 contacts Zn(2+). A 'HIGH' region motif is present at residues 30–40 (PTVYNFLHVGN). Positions 208, 233, and 237 each coordinate Zn(2+). The 'KMSKS' region signature appears at 265 to 269 (KMSKS). Residue lysine 268 participates in ATP binding.

This sequence belongs to the class-I aminoacyl-tRNA synthetase family. As to quaternary structure, monomer. Zn(2+) is required as a cofactor.

It localises to the cytoplasm. It carries out the reaction tRNA(Cys) + L-cysteine + ATP = L-cysteinyl-tRNA(Cys) + AMP + diphosphate. The protein is Cysteine--tRNA ligase of Bdellovibrio bacteriovorus (strain ATCC 15356 / DSM 50701 / NCIMB 9529 / HD100).